The chain runs to 119 residues: Large ribosomal subunit protein uL24 (119 aa).

This sequence belongs to the universal ribosomal protein uL24 family. In terms of assembly, part of the 50S ribosomal subunit.

In terms of biological role, one of two assembly initiator proteins, it binds directly to the 5'-end of the 23S rRNA, where it nucleates assembly of the 50S subunit. Functionally, located at the polypeptide exit tunnel on the outside of the subunit. This is Large ribosomal subunit protein uL24 from Methanococcus maripaludis (strain C5 / ATCC BAA-1333).